An 82-amino-acid chain; its full sequence is ATP synthase subunit c, chloroplastic (82 aa).

A run of 2 helical transmembrane segments spans residues 7–27 and 57–77; these read AASVVASGLSVGLAAIGPGIG and LAFMESLTIYGLVVALALLFA.

It belongs to the ATPase C chain family. In terms of assembly, F-type ATPases have 2 components, F(1) - the catalytic core - and F(0) - the membrane proton channel. F(1) has five subunits: alpha(3), beta(3), gamma(1), delta(1), epsilon(1). F(0) has four main subunits: a(1), b(1), b'(1) and c(10-14). The alpha and beta chains form an alternating ring which encloses part of the gamma chain. F(1) is attached to F(0) by a central stalk formed by the gamma and epsilon chains, while a peripheral stalk is formed by the delta, b and b' chains.

The protein resides in the plastid. It localises to the chloroplast thylakoid membrane. Its function is as follows. F(1)F(0) ATP synthase produces ATP from ADP in the presence of a proton or sodium gradient. F-type ATPases consist of two structural domains, F(1) containing the extramembraneous catalytic core and F(0) containing the membrane proton channel, linked together by a central stalk and a peripheral stalk. During catalysis, ATP synthesis in the catalytic domain of F(1) is coupled via a rotary mechanism of the central stalk subunits to proton translocation. Key component of the F(0) channel; it plays a direct role in translocation across the membrane. A homomeric c-ring of between 10-14 subunits forms the central stalk rotor element with the F(1) delta and epsilon subunits. In Guillardia theta (Cryptophyte), this protein is ATP synthase subunit c, chloroplastic.